Here is a 308-residue protein sequence, read N- to C-terminus: Uridine diphosphate glucose pyrophosphatase NUDT22 (308 aa).

Residues Phe56, Tyr86, Arg138, Ala143, Asp150, His155, and Glu157 each coordinate substrate. A Nudix hydrolase domain is found at 117–284 (ADPLGVGAAL…KGAILLYNRH (168 aa)). Residues 174 to 195 (GLLVVRELFSSVLQEICDEVNL) carry the Nudix box motif. The Mg(2+) site is built by Glu188 and Glu192. Substrate is bound at residue Ser273.

This sequence belongs to the Nudix hydrolase family. It depends on Mg(2+) as a cofactor.

The enzyme catalyses UDP-sugar + H2O = UMP + alpha-D-aldose 1-phosphate.. Hydrolyzes UDP-glucose to glucose 1-phosphate and UMP and UDP-galactose to galactose 1-phosphate and UMP. Preferred substrate is UDP-glucose. This chain is Uridine diphosphate glucose pyrophosphatase NUDT22 (Nudt22), found in Mus musculus (Mouse).